A 399-amino-acid chain; its full sequence is Lymphoid enhancer-binding factor 1 (399 aa).

The segment covering 1-14 (MPQLSGGGGGGGGD) has biased composition (gly residues). The CTNNB1-binding stretch occupies residues 1-62 (MPQLSGGGGG…IKSSLVNESE (62 aa)). Positions 1–104 (MPQLSGGGGG…KHPDGGLYNK (104 aa)) are disordered. Composition is skewed to basic and acidic residues over residues 24–45 (IPFKDEGDPQKEKIFAEISHPE) and 82–98 (PYHDKAREHPDDGKHPD). K27 participates in a covalent cross-link: Glycyl lysine isopeptide (Lys-Gly) (interchain with G-Cter in SUMO). At S132 the chain carries Phosphoserine. Position 155 is a phosphothreonine; by NLK (T155). Position 166 is a phosphoserine; by NLK (S166). 2 disordered regions span residues 166 to 192 (SPGSHPSHIPSDVNSKQGMSRHPPAPD) and 268 to 298 (VKQEHPHTDSDLMHVKPQHEQRKEQEPKRPH). K269 is covalently cross-linked (Glycyl lysine isopeptide (Lys-Gly) (interchain with G-Cter in SUMO)). A compositionally biased stretch (basic and acidic residues) spans 269–296 (KQEHPHTDSDLMHVKPQHEQRKEQEPKR). The segment at residues 299–367 (IKKPLNAFML…LHMQLYPGWS (69 aa)) is a DNA-binding region (HMG box). The segment at 369-399 (RDNYGKKKKRKREKLQESASGTGPRMTAAYI) is disordered.

The protein belongs to the TCF/LEF family. In terms of assembly, binds the armadillo repeat of CTNNB1 and forms a stable complex. Interacts with EP300, TLE1 and PIASG. Binds ALYREF/THOC4, MDFI and MDFIC. Interacts with NLK. Interacts with DAZAP2. Post-translationally, phosphorylated at Thr-155 and/or Ser-166 by NLK. Phosphorylation by NLK at these sites represses LEF1-mediated transcriptional activation of target genes of the canonical Wnt signaling pathway. In terms of tissue distribution, detected in thymus. Not detected in normal colon, but highly expressed in colon cancer biopsies and colon cancer cell lines. Expressed in several pancreatic tumors and weakly expressed in normal pancreatic tissue. Isoforms 1 and 5 are detected in several pancreatic cell lines.

The protein resides in the nucleus. Its function is as follows. Transcription factor that binds DNA in a sequence-specific manner. Participates in the Wnt signaling pathway. Activates transcription of target genes in the presence of CTNNB1 and EP300. PIAG antagonizes both Wnt-dependent and Wnt-independent activation by LEF1. TLE1, TLE2, TLE3 and TLE4 repress transactivation mediated by LEF1 and CTNNB1. Regulates T-cell receptor alpha enhancer function. Required for IL17A expressing gamma-delta T-cell maturation and development, via binding to regulator loci of BLK to modulate expression. Acts as a positive regulator of odontoblast differentiation during mesenchymal tooth germ formation, expression is repressed during the bell stage by MSX1-mediated inhibition of CTNNB1 signaling. May play a role in hair cell differentiation and follicle morphogenesis. Transcriptionally activates MYC and CCND1 expression and enhances proliferation of pancreatic tumor cells. Functionally, lacks the CTNNB1 interaction domain and may therefore be an antagonist for Wnt signaling. In terms of biological role, transcriptionally activates the fibronectin promoter, binds to and represses transcription from the E-cadherin promoter in a CTNNB1-independent manner, and is involved in reducing cellular aggregation and increasing cell migration of pancreatic cancer cells. The protein is Lymphoid enhancer-binding factor 1 of Homo sapiens (Human).